The sequence spans 476 residues: Arginine biosynthesis bifunctional protein ArgJ, mitochondrial (476 aa).

Substrate-binding residues include threonine 193, lysine 219, threonine 237, glutamate 337, asparagine 471, and serine 476. Threonine 237 (nucleophile) is an active-site residue.

The protein belongs to the ArgJ family. As to quaternary structure, heterodimer of an alpha and a beta chain. Post-translationally, the alpha and beta chains are autoproteolytically processed from a single precursor protein within the mitochondrion.

The protein localises to the mitochondrion matrix. It catalyses the reaction N(2)-acetyl-L-ornithine + L-glutamate = N-acetyl-L-glutamate + L-ornithine. The enzyme catalyses L-glutamate + acetyl-CoA = N-acetyl-L-glutamate + CoA + H(+). It functions in the pathway amino-acid biosynthesis; L-arginine biosynthesis; L-ornithine and N-acetyl-L-glutamate from L-glutamate and N(2)-acetyl-L-ornithine (cyclic): step 1/1. It participates in amino-acid biosynthesis; L-arginine biosynthesis; N(2)-acetyl-L-ornithine from L-glutamate: step 1/4. Functionally, catalyzes two activities which are involved in the cyclic version of arginine biosynthesis: the synthesis of acetylglutamate from glutamate and acetyl-CoA, and of ornithine by transacetylation between acetylornithine and glutamate. This chain is Arginine biosynthesis bifunctional protein ArgJ, mitochondrial, found in Cryptococcus neoformans var. neoformans serotype D (strain B-3501A) (Filobasidiella neoformans).